A 427-amino-acid chain; its full sequence is Enolase (427 aa).

Gln-163 serves as a coordination point for (2R)-2-phosphoglycerate. The active-site Proton donor is the Glu-205. Mg(2+) is bound by residues Asp-242, Glu-285, and Asp-312. 4 residues coordinate (2R)-2-phosphoglycerate: Lys-337, Arg-366, Ser-367, and Lys-388. Residue Lys-337 is the Proton acceptor of the active site.

The protein belongs to the enolase family. The cofactor is Mg(2+).

The protein resides in the cytoplasm. The protein localises to the secreted. Its subcellular location is the cell surface. It carries out the reaction (2R)-2-phosphoglycerate = phosphoenolpyruvate + H2O. Its pathway is carbohydrate degradation; glycolysis; pyruvate from D-glyceraldehyde 3-phosphate: step 4/5. Its function is as follows. Catalyzes the reversible conversion of 2-phosphoglycerate (2-PG) into phosphoenolpyruvate (PEP). It is essential for the degradation of carbohydrates via glycolysis. This chain is Enolase, found in Rhodopseudomonas palustris (strain BisA53).